We begin with the raw amino-acid sequence, 1261 residues long: Pentatricopeptide repeat-containing protein 5, mitochondrial (1261 aa).

15 PPR repeats span residues H365–T404, N405–I442, P443–A479, S480–D514, T550–L584, H806–N849, M852–P886, R887–P924, S925–P959, T960–P995, R996–P1031, S1032–I1068, D1109–L1143, N1144–K1179, and E1180–L1214. A disordered region spans residues N1225–N1261. The segment covering L1237–N1261 has biased composition (polar residues).

The protein resides in the mitochondrion. In terms of biological role, mitochondrial RNA-binding protein that acts as a general negative regulator of mitochondrial translation. The chain is Pentatricopeptide repeat-containing protein 5, mitochondrial (ppr5) from Schizosaccharomyces pombe (strain 972 / ATCC 24843) (Fission yeast).